The chain runs to 68 residues: ATP-dependent 6-phosphofructokinase (68 aa).

Position 17–20 (17–20) interacts with ATP; it reads GDGT. A Mg(2+)-binding site is contributed by aspartate 18. Aspartate 48 acts as the Proton acceptor in catalysis.

The protein belongs to the phosphofructokinase type A (PFKA) family. PPi-dependent PFK group II subfamily. Atypical ATP-dependent clade 'X' sub-subfamily. In terms of assembly, homotetramer. The cofactor is Mg(2+).

It is found in the cytoplasm. It catalyses the reaction beta-D-fructose 6-phosphate + ATP = beta-D-fructose 1,6-bisphosphate + ADP + H(+). It functions in the pathway carbohydrate degradation; glycolysis; D-glyceraldehyde 3-phosphate and glycerone phosphate from D-glucose: step 3/4. Its activity is regulated as follows. Allosterically activated by AMP. Functionally, catalyzes the phosphorylation of D-fructose 6-phosphate to fructose 1,6-bisphosphate by ATP, the first committing step of glycolysis. The protein is ATP-dependent 6-phosphofructokinase (PFK) of Triticum aestivum (Wheat).